Consider the following 419-residue polypeptide: Phosphoglycerate kinase (419 aa).

(2R)-3-phosphoglycerate is bound by residues valine 24, aspartate 25, phenylalanine 26, asparagine 27, arginine 40, serine 63, histidine 64, glycine 66, arginine 67, leucine 122, arginine 123, histidine 169, and arginine 170. Glycine 213 is an ADP binding site. Residue glycine 213 coordinates CDP. Residues alanine 214 and lysine 215 each contribute to the AMP site. ATP is bound at residue alanine 214. Alanine 214 is a binding site for Mg(2+). 2 residues coordinate Mg(2+): alanine 217 and aspartate 218. Aspartate 218 lines the CDP pocket. An AMP-binding site is contributed by lysine 219. ATP is bound at residue lysine 219. Glycine 237 contacts ADP. Glycine 237 provides a ligand contact to CDP. Residues glycine 238 and glycine 313 each coordinate AMP. ATP is bound by residues glycine 238 and glycine 313. The CDP site is built by glycine 338 and phenylalanine 343. Phenylalanine 343 provides a ligand contact to ADP. An AMP-binding site is contributed by glutamate 344. Residues glutamate 344, aspartate 375, and threonine 376 each coordinate ATP. Aspartate 375 lines the Mg(2+) pocket.

Belongs to the phosphoglycerate kinase family. As to quaternary structure, monomer. It depends on Mg(2+) as a cofactor.

It carries out the reaction (2R)-3-phosphoglycerate + ATP = (2R)-3-phospho-glyceroyl phosphate + ADP. It functions in the pathway carbohydrate degradation; glycolysis; pyruvate from D-glyceraldehyde 3-phosphate: step 2/5. The protein is Phosphoglycerate kinase (PGK) of Sterkiella nova (Ciliate).